Here is a 323-residue protein sequence, read N- to C-terminus: Putative divalent cation/proton antiporter TMEM165 (323 aa).

An N-terminal signal peptide occupies residues 1–33; sequence MAAAARGSGRAPTRRLLVLLLLQLLWAPAGVRA. Topologically, residues 34 to 89 are lumenal; sequence GPEEDLSHRNQEPPAPAQQLQPQPAAVQGLEPARAEKGLTPVAPVHTNKEDAAAQT. A compositionally biased stretch (basic and acidic residues) spans 35-44; it reads PEEDLSHRNQ. Residues 35–60 form a disordered region; that stretch reads PEEDLSHRNQEPPAPAQQLQPQPAAV. Low complexity predominate over residues 50–59; it reads AQQLQPQPAA. The chain crosses the membrane as a helical span at residues 90 to 110; the sequence is NLGFIHAFVAAISVIIVSELG. At 111–126 the chain is on the cytoplasmic side; sequence DKTFFIAAIMAMRYNR. Residues 127 to 147 form a helical membrane-spanning segment; it reads LTVLAGAMLALALMTCLSVLF. At 148-151 the chain is on the lumenal side; that stretch reads GYAT. Residues 152–172 form a helical membrane-spanning segment; that stretch reads TVIPRVYTYYVSTALFAIFGI. Residues 173 to 227 are Cytoplasmic-facing; sequence RMLREGLKMSPDEGQEELEEVQAELKKKDEEFQRTKLLNGPDVETGTSTAIPQKK. The stretch at 184-211 forms a coiled coil; it reads DEGQEELEEVQAELKKKDEEFQRTKLLN. A helical membrane pass occupies residues 228–248; sequence WLHFISPIFVQALTLTFLAEW. The Lumenal portion of the chain corresponds to 249–266; sequence GDRSQLTTIVLAAREDPY. A helical transmembrane segment spans residues 267 to 287; the sequence is GVAVGGTVGHCLCTGLAVIGG. The Cytoplasmic segment spans residues 288-298; sequence RMIAQKISVRT. A helical transmembrane segment spans residues 299–319; the sequence is VTIIGGIVFLAFAFSALFISP. At 320-323 the chain is on the lumenal side; it reads ESGF.

The protein belongs to the GDT1 family. Expressed in mammary epithelial cells (at protein level).

The protein resides in the golgi apparatus membrane. It carries out the reaction Ca(2+)(in) + n H(+)(out) = Ca(2+)(out) + n H(+)(in). The enzyme catalyses Mn(2+)(in) + n H(+)(out) = Mn(2+)(out) + n H(+)(in). Its function is as follows. Putative divalent cation:proton antiporter that exchanges calcium or manganese ions for protons across the Golgi membrane. Mediates the reversible transport of calcium or manganese to the Golgi lumen driven by the proton gradient and possibly the membrane potential generated by V-ATPase. Provides calcium or manganese cofactors to resident Golgi enzymes and contributes to the maintenance of an acidic luminal Golgi pH required for proper functioning of the secretory pathway. Promotes Ca(2+) storage within the Golgi lumen of the mammary epithelial cells to be then secreted into milk. The transport mechanism and stoichiometry remains to be elucidated. The chain is Putative divalent cation/proton antiporter TMEM165 from Mus musculus (Mouse).